The sequence spans 57 residues: Potassium channel toxin alpha-KTx 8.2 (57 aa).

The signal sequence occupies residues 1 to 28 (MSRLYAIILIALVFNVVMTITPDMKVEA). 3 cysteine pairs are disulfide-bonded: C31/C47, C34/C52, and C38/C54.

It belongs to the short scorpion toxin superfamily. Potassium channel inhibitor family. Alpha-KTx 08 subfamily. Expressed by the venom gland.

It localises to the secreted. This toxin inhibits rKv1.1/KCNA1 (100% inhibition at 3 uM), Kv1.3/KCNA3 (human, mouse and rat) (IC(50)=269-467 nM), shaker IR (60% at 3 uM) and activates the mouse capsaicin receptor TRPV1 (EC(50)=132 uM, at 20 degrees Celsius), a non-selective cation channel expressed by sensory neurons of the pain pathway. In vivo, intraplantar injection of this toxin in WT mice hind paw shows significant acute pain, whereas no pain is observed when the toxin is injected into TRPV1 KO mice. In addition, subcutaneous injection into mice (185 mg) produces an excitation of the animal, but no lethality, whereas injection into cockroaches does not provoke lethality as well. This Olivierus martensii (Manchurian scorpion) protein is Potassium channel toxin alpha-KTx 8.2.